Reading from the N-terminus, the 447-residue chain is FAD-dependent monooxygenase tropB (447 aa).

A helical membrane pass occupies residues 12–32; it reads PLSVGIVGGGIIGVILAAGLV. Positions 42, 55, and 124 each coordinate FAD. An N-linked (GlcNAc...) asparagine glycan is attached at Asn-153. Active-site residues include Arg-206 and Tyr-239. N-linked (GlcNAc...) asparagine glycosylation occurs at Asn-243. Positions 322 and 335 each coordinate FAD.

The protein belongs to the paxM FAD-dependent monooxygenase family. FAD serves as cofactor.

The protein localises to the membrane. The protein operates within secondary metabolite biosynthesis. In terms of biological role, FAD-dependent monooxygenase; part of the gene cluster that mediates the biosynthesis of the tropolone class of fungal maleic anhydrides. Within the pathway, tropB catalyzes a synthetically challenging asymmetric oxidative dearomatization reaction to convert 3-methylorcinaldehyde into a hydroxycyclohexadione. The pathway begins with the synthesis of 3-methylorcinaldehyde by the non-reducing polyketide synthase (PKS) tropA. 3-methylorcinaldehyde is the substrate for the FAD-dependent monooxygenase tropB to yield a dearomatized hydroxycyclohexadione. The 2-oxoglutarate-dependent dioxygenase tropC then performs the oxidative ring expansion to provide the first tropolone metabolite stipitaldehyde. Trop D converts stipitaldehyde into stipitacetal which is in turn converted to stipitalide by the short-chain dehydrogenase/reductase tropE. The next steps involve tropF, tropG, tropH, tropI and tropJ to form successive tropolone maleic anhydrides including stipitaldehydic, stipitatonic and stipitatic acids. In Talaromyces stipitatus (strain ATCC 10500 / CBS 375.48 / QM 6759 / NRRL 1006) (Penicillium stipitatum), this protein is FAD-dependent monooxygenase tropB.